Reading from the N-terminus, the 106-residue chain is Transcription factor TRY (106 aa).

A Myb-like domain is found at 34–71; that stretch reads TEQEEDLIFRMYRLVGDRWDLIAGRVPGRQPEEIERYW. Residues 83 to 106 form a disordered region; that stretch reads RRQLHSSSHKHTKPHRPRFSIYPS. The span at 84 to 100 shows a compositional bias: basic residues; it reads RQLHSSSHKHTKPHRPR.

In terms of assembly, interacts with GL3 and thus prevents GL1 GL3 interaction. Also interacts with BHLH2. In terms of tissue distribution, expressed in roots, leaves, siliques and inflorescences.

The protein resides in the nucleus. In terms of biological role, transcription factor. Involved in epidermal cell fate specification. Negative regulator of trichome development, including endoreplication, by lateral inhibition involving intercellular interactions. Promotes the formation of hair developing cells (trichoblasts) in H position in root epidermis, probably by inhibiting non-hair cell (atrichoblasts) formation. In Arabidopsis thaliana (Mouse-ear cress), this protein is Transcription factor TRY (TRY).